The primary structure comprises 375 residues: Homeobox protein Meis3 (375 aa).

Residues 25–51 (PETVPAVPGPYGPHRPPQPLPPGLDSD) are disordered. The span at 31-46 (VPGPYGPHRPPQPLPP) shows a compositional bias: pro residues. Residues 96–179 (GGDVCSSDSF…PIDLVIEDRD (84 aa)) form the MEIS N-terminal domain. Disordered regions lie at residues 197 to 268 (PDQN…KRGI) and 329 to 348 (NRTG…GGYT). A compositionally biased stretch (low complexity) spans 227 to 241 (SQSGDNSSDQGDGLD). Residues 262 to 324 (RNKKRGIFPK…NARRRIVQPM (63 aa)) constitute a DNA-binding region (homeobox; TALE-type).

Belongs to the TALE/MEIS homeobox family.

Its subcellular location is the nucleus. Its function is as follows. Transcriptional regulator which directly modulates PDPK1 expression, thus promoting survival of pancreatic beta-cells. Also regulates expression of NDFIP1, BNIP3, and CCNG1. The sequence is that of Homeobox protein Meis3 (MEIS3) from Homo sapiens (Human).